Here is a 190-residue protein sequence, read N- to C-terminus: Potassium-transporting ATPase KdpC subunit (190 aa).

The chain crosses the membrane as a helical span at residues 11–31 (LIVLMSLITGVAYPLVVTGVA).

The protein belongs to the KdpC family. As to quaternary structure, the system is composed of three essential subunits: KdpA, KdpB and KdpC.

It localises to the cell inner membrane. Functionally, part of the high-affinity ATP-driven potassium transport (or Kdp) system, which catalyzes the hydrolysis of ATP coupled with the electrogenic transport of potassium into the cytoplasm. This subunit acts as a catalytic chaperone that increases the ATP-binding affinity of the ATP-hydrolyzing subunit KdpB by the formation of a transient KdpB/KdpC/ATP ternary complex. In Pseudomonas syringae pv. tomato (strain ATCC BAA-871 / DC3000), this protein is Potassium-transporting ATPase KdpC subunit.